The sequence spans 317 residues: 4-hydroxy-3-methylbut-2-enyl diphosphate reductase (317 aa).

Cysteine 12 contacts [4Fe-4S] cluster. (2E)-4-hydroxy-3-methylbut-2-enyl diphosphate contacts are provided by histidine 41 and histidine 74. Residues histidine 41 and histidine 74 each coordinate dimethylallyl diphosphate. Histidine 41 and histidine 74 together coordinate isopentenyl diphosphate. Cysteine 97 contributes to the [4Fe-4S] cluster binding site. Histidine 125 serves as a coordination point for (2E)-4-hydroxy-3-methylbut-2-enyl diphosphate. Histidine 125 contributes to the dimethylallyl diphosphate binding site. Position 125 (histidine 125) interacts with isopentenyl diphosphate. Residue glutamate 127 is the Proton donor of the active site. Threonine 168 is a binding site for (2E)-4-hydroxy-3-methylbut-2-enyl diphosphate. Cysteine 198 is a binding site for [4Fe-4S] cluster. (2E)-4-hydroxy-3-methylbut-2-enyl diphosphate is bound by residues serine 226, serine 227, asparagine 228, and serine 270. The dimethylallyl diphosphate site is built by serine 226, serine 227, asparagine 228, and serine 270. Residues serine 226, serine 227, asparagine 228, and serine 270 each coordinate isopentenyl diphosphate.

This sequence belongs to the IspH family. Homodimer. [4Fe-4S] cluster is required as a cofactor.

It catalyses the reaction isopentenyl diphosphate + 2 oxidized [2Fe-2S]-[ferredoxin] + H2O = (2E)-4-hydroxy-3-methylbut-2-enyl diphosphate + 2 reduced [2Fe-2S]-[ferredoxin] + 2 H(+). The catalysed reaction is dimethylallyl diphosphate + 2 oxidized [2Fe-2S]-[ferredoxin] + H2O = (2E)-4-hydroxy-3-methylbut-2-enyl diphosphate + 2 reduced [2Fe-2S]-[ferredoxin] + 2 H(+). The protein operates within isoprenoid biosynthesis; dimethylallyl diphosphate biosynthesis; dimethylallyl diphosphate from (2E)-4-hydroxy-3-methylbutenyl diphosphate: step 1/1. It functions in the pathway isoprenoid biosynthesis; isopentenyl diphosphate biosynthesis via DXP pathway; isopentenyl diphosphate from 1-deoxy-D-xylulose 5-phosphate: step 6/6. Its function is as follows. Catalyzes the conversion of 1-hydroxy-2-methyl-2-(E)-butenyl 4-diphosphate (HMBPP) into a mixture of isopentenyl diphosphate (IPP) and dimethylallyl diphosphate (DMAPP). Acts in the terminal step of the DOXP/MEP pathway for isoprenoid precursor biosynthesis. This Edwardsiella ictaluri (strain 93-146) protein is 4-hydroxy-3-methylbut-2-enyl diphosphate reductase.